Consider the following 524-residue polypeptide: Leucine-rich repeat-containing protein 1 (524 aa).

LRR repeat units follow at residues Asn11–Tyr34, Ala35–Leu58, Lys60–Phe81, Gln83–Lys105, Leu107–Glu126, Leu127–Asn149, Leu150–Gln172, Leu173–Leu196, His198–Asn218, Leu219–Leu242, Ser244–Lys264, Leu265–Cys288, Asn290–Lys310, Leu311–Cys334, Ser336–Gln356, Ala357–Leu380, and Leu382–Ala405. A coiled-coil region spans residues Ser456–Glu512. The segment at Glu464–Glu485 is disordered. Thr480 is subject to Phosphothreonine.

Interacts with DLG1. May form a complex with DLG1 and ERBIN, where interaction between LRRC1 and ERBIN is indirect.

Its subcellular location is the cytoplasm. It is found in the membrane. This is Leucine-rich repeat-containing protein 1 (Lrrc1) from Mus musculus (Mouse).